The chain runs to 279 residues: Single-strand selective monofunctional uracil DNA glycosylase (279 aa).

3 residues coordinate substrate: Met-86, Phe-100, and Asn-165. The interval 175–189 is DNA-binding; that stretch reads SGRNLTPAELPAKQR. His-241 is a binding site for substrate.

The protein belongs to the uracil-DNA glycosylase (UDG) superfamily. SMUG1 family.

It is found in the nucleus. Functionally, recognizes base lesions in the genome and initiates base excision DNA repair. Acts as a monofunctional DNA glycosylase specific for uracil (U) residues in DNA with a preference for single-stranded DNA substrates. The activity is greater toward mismatches (U/G) compared to matches (U/A). Excises uracil (U), 5-formyluracil (fU) and uracil derivatives bearing an oxidized group at C5 [5-hydroxyuracil (hoU) and 5-hydroxymethyluracil (hmU)] in ssDNA and dsDNA, but not analogous cytosine derivatives (5-hydroxycytosine and 5-formylcytosine), nor other oxidized bases. The activity is damage-specific and salt-dependent. The substrate preference is the following: ssDNA &gt; dsDNA (G pair) = dsDNA (A pair) at low salt concentration, and dsDNA (G pair) &gt; dsDNA (A pair) &gt; ssDNA at high salt concentration. In Mus musculus (Mouse), this protein is Single-strand selective monofunctional uracil DNA glycosylase (Smug1).